The primary structure comprises 691 residues: 1-butanol dehydrogenase (cytochrome c) (691 aa).

The first 38 residues, 1–38, serve as a signal peptide directing secretion; it reads MLTTTFARKREESVPLRKGIQRALLGLSCLVLSTTSFA. Glu84 serves as a coordination point for pyrroloquinoline quinone. Cysteines 130 and 131 form a disulfide. Residues Arg136, Thr181, and 197-198 each bind pyrroloquinoline quinone; that span reads GA. Residues Glu199 and Asp322 each contribute to the Ca(2+) site. Asp322 serves as the catalytic Proton acceptor. Pyrroloquinoline quinone is bound by residues Lys349, 408–409, and Val558; that span reads NW. The Cytochrome c domain maps to 605–684; that stretch reads DDVAEGTGLY…KIKAFILGTA (80 aa). Residues Cys618, Cys621, His622, and Met661 each coordinate heme c.

Belongs to the bacterial PQQ dehydrogenase family. In terms of assembly, monomer. Pyrroloquinoline quinone serves as cofactor. It depends on Ca(2+) as a cofactor. Requires heme c as cofactor.

The protein resides in the periplasm. The catalysed reaction is butan-1-ol + 2 Fe(III)-[cytochrome c] = butanal + 2 Fe(II)-[cytochrome c] + 2 H(+). Dehydrogenase activity is increased by ammonium ions. In terms of biological role, involved in the metabolism of butane. Could be important in the detoxification of 1-butanol. Catalyzes the oxidation of 1-butanol to butyraldehyde. Also able to use 1-propanol, 2-pentanol, propionaldehyde and butyraldehyde as substrates. This Thauera butanivorans (strain ATCC 43655 / DSM 2080 / JCM 20651 / CCUG 51053 / NBRC 103042 / IAM 12574 / Bu B1211) (Pseudomonas butanovora) protein is 1-butanol dehydrogenase (cytochrome c).